A 270-amino-acid chain; its full sequence is Formamidopyrimidine-DNA glycosylase (270 aa).

Pro-2 serves as the catalytic Schiff-base intermediate with DNA. The Proton donor role is filled by Glu-3. Residue Lys-58 is the Proton donor; for beta-elimination activity of the active site. Positions 91, 110, and 151 each coordinate DNA. The FPG-type zinc-finger motif lies at 236 to 270 (FVYGRGGQPCKVCGTTLREIKLGQRASVYCPKCQR). Arg-260 acts as the Proton donor; for delta-elimination activity in catalysis.

This sequence belongs to the FPG family. As to quaternary structure, monomer. It depends on Zn(2+) as a cofactor.

It carries out the reaction Hydrolysis of DNA containing ring-opened 7-methylguanine residues, releasing 2,6-diamino-4-hydroxy-5-(N-methyl)formamidopyrimidine.. The enzyme catalyses 2'-deoxyribonucleotide-(2'-deoxyribose 5'-phosphate)-2'-deoxyribonucleotide-DNA = a 3'-end 2'-deoxyribonucleotide-(2,3-dehydro-2,3-deoxyribose 5'-phosphate)-DNA + a 5'-end 5'-phospho-2'-deoxyribonucleoside-DNA + H(+). Its function is as follows. Involved in base excision repair of DNA damaged by oxidation or by mutagenic agents. Acts as a DNA glycosylase that recognizes and removes damaged bases. Has a preference for oxidized purines, such as 7,8-dihydro-8-oxoguanine (8-oxoG). Has AP (apurinic/apyrimidinic) lyase activity and introduces nicks in the DNA strand. Cleaves the DNA backbone by beta-delta elimination to generate a single-strand break at the site of the removed base with both 3'- and 5'-phosphates. This chain is Formamidopyrimidine-DNA glycosylase, found in Pseudomonas savastanoi pv. phaseolicola (strain 1448A / Race 6) (Pseudomonas syringae pv. phaseolicola (strain 1448A / Race 6)).